The chain runs to 2102 residues: Mediator of RNA polymerase II transcription subunit 13-like (2102 aa).

Disordered stretches follow at residues 304–335 (SYAG…EEAQ), 432–487 (QRAC…QPSL), 514–587 (VTSS…LDPL), 689–758 (SSAV…TTSL), 776–819 (NSDE…DLHQ), and 947–1034 (SVVE…SSVE). Positions 439–450 (GHPPSAGQPPQP) are enriched in pro residues. A compositionally biased stretch (basic and acidic residues) spans 455–467 (KMAEKLEKGDKQQ). Positions 693-714 (CDEDPEQESDPYAFEEGDEEFN) are enriched in acidic residues. 2 stretches are compositionally biased toward basic and acidic residues: residues 715–737 (FSDK…REDG) and 794–804 (AEEKFGGKEPK). Over residues 947–974 (SVVEQEQSCTPQTHNTFMSNSAPPSNSG) the composition is skewed to polar residues. A compositionally biased stretch (low complexity) spans 979–990 (PSPATPRISAPT). Residues 1015 to 1029 (SDLNSPASTPSTCRP) are compositionally biased toward polar residues. 2 short sequence motifs (LXXLL motif) span residues 1165-1169 (LMLLL) and 1254-1258 (LRMLL). Disordered regions lie at residues 1451–1574 (LTQR…DGDS) and 1948–1983 (NSPT…HDES). 3 stretches are compositionally biased toward low complexity: residues 1458–1467 (SSSQTSSSSS), 1476–1502 (TPTT…SSSS), and 1522–1538 (GAQG…QSAG). Polar residues predominate over residues 1542 to 1552 (DATSATSQPQV). Residues 1973–1983 (GTDRMESHDES) show a composition bias toward basic and acidic residues.

It belongs to the Mediator complex subunit 13 family. Component of the Mediator complex.

It localises to the nucleus. Component of the Mediator complex, a coactivator involved in regulated gene transcription of nearly all RNA polymerase II-dependent genes. Mediator functions as a bridge to convey information from gene-specific regulatory proteins to the basal RNA polymerase II transcription machinery. Mediator is recruited to promoters by direct interactions with regulatory proteins and serves as a scaffold for the assembly of a functional preinitiation complex with RNA polymerase II and the general transcription factors. This chain is Mediator of RNA polymerase II transcription subunit 13-like, found in Danio rerio (Zebrafish).